The sequence spans 569 residues: 2-succinyl-5-enolpyruvyl-6-hydroxy-3-cyclohexene-1-carboxylate synthase (569 aa).

It belongs to the TPP enzyme family. MenD subfamily. As to quaternary structure, homodimer. The cofactor is Mg(2+). Requires Mn(2+) as cofactor. Thiamine diphosphate serves as cofactor.

The catalysed reaction is isochorismate + 2-oxoglutarate + H(+) = 5-enolpyruvoyl-6-hydroxy-2-succinyl-cyclohex-3-ene-1-carboxylate + CO2. The protein operates within quinol/quinone metabolism; 1,4-dihydroxy-2-naphthoate biosynthesis; 1,4-dihydroxy-2-naphthoate from chorismate: step 2/7. It participates in quinol/quinone metabolism; menaquinone biosynthesis. Its function is as follows. Catalyzes the thiamine diphosphate-dependent decarboxylation of 2-oxoglutarate and the subsequent addition of the resulting succinic semialdehyde-thiamine pyrophosphate anion to isochorismate to yield 2-succinyl-5-enolpyruvyl-6-hydroxy-3-cyclohexene-1-carboxylate (SEPHCHC). This chain is 2-succinyl-5-enolpyruvyl-6-hydroxy-3-cyclohexene-1-carboxylate synthase, found in Haemophilus ducreyi (strain 35000HP / ATCC 700724).